We begin with the raw amino-acid sequence, 110 residues long: Ribonuclease P protein component 4 (110 aa).

Zn(2+)-binding residues include C65, C68, C94, and C97.

This sequence belongs to the eukaryotic/archaeal RNase P protein component 4 family. As to quaternary structure, consists of a catalytic RNA component and at least 4-5 protein subunits. Requires Zn(2+) as cofactor.

The protein localises to the cytoplasm. The enzyme catalyses Endonucleolytic cleavage of RNA, removing 5'-extranucleotides from tRNA precursor.. Its function is as follows. Part of ribonuclease P, a protein complex that generates mature tRNA molecules by cleaving their 5'-ends. In Methanococcus maripaludis (strain C6 / ATCC BAA-1332), this protein is Ribonuclease P protein component 4.